The sequence spans 349 residues: Hydrophobic dipeptide epimerase (349 aa).

Residues threonine 127 and 153–155 (KIK) each bind substrate. The Mg(2+) site is built by aspartate 186, glutamate 212, and aspartate 237. Substrate-binding positions include lysine 259 and 309–311 (DLD).

It belongs to the mandelate racemase/muconate lactonizing enzyme family. Requires Mg(2+) as cofactor.

Its function is as follows. Catalyzes the epimerization a variety of hydrophobic dipeptides. Epimerase activity is highest with L-Ala-L-Tyr, and lower with L-Ala-L-Met, L-Ala-L-Phe, L-Tyr-L-Ala, L-Tyr-L-Met and L-Tyr-L-Trp (in vitro). The chain is Hydrophobic dipeptide epimerase from Flavobacteria bacterium (strain MS024-2A).